A 394-amino-acid polypeptide reads, in one-letter code: Elongation factor Tu (394 aa).

One can recognise a tr-type G domain in the interval 10-204 (RTHINVGTIG…ILDNYIPEPK (195 aa)). The tract at residues 19–26 (GHVDHGKT) is G1. 19 to 26 (GHVDHGKT) lines the GTP pocket. T26 contributes to the Mg(2+) binding site. The interval 60-64 (GITIN) is G2. The interval 81–84 (DCPG) is G3. GTP is bound by residues 81–85 (DCPGH) and 136–139 (NKCD). The interval 136–139 (NKCD) is G4. The tract at residues 174-176 (SAL) is G5.

This sequence belongs to the TRAFAC class translation factor GTPase superfamily. Classic translation factor GTPase family. EF-Tu/EF-1A subfamily. Monomer.

Its subcellular location is the cytoplasm. It catalyses the reaction GTP + H2O = GDP + phosphate + H(+). In terms of biological role, GTP hydrolase that promotes the GTP-dependent binding of aminoacyl-tRNA to the A-site of ribosomes during protein biosynthesis. The polypeptide is Elongation factor Tu (Blochmanniella floridana).